The following is a 342-amino-acid chain: Farnesyl pyrophosphate synthase (342 aa).

Isopentenyl diphosphate contacts are provided by lysine 47, arginine 50, and glutamine 86. Positions 93 and 97 each coordinate Mg(2+). Residue arginine 102 coordinates dimethylallyl diphosphate. Isopentenyl diphosphate is bound at residue arginine 103. 5 residues coordinate dimethylallyl diphosphate: lysine 190, threonine 191, glutamine 229, lysine 246, and lysine 255.

It belongs to the FPP/GGPP synthase family. As to quaternary structure, homodimer. Mg(2+) is required as a cofactor. Mostly expressed in roots and seeds, and to a lower extent, in leaves and stems.

It is found in the cytoplasm. The enzyme catalyses isopentenyl diphosphate + dimethylallyl diphosphate = (2E)-geranyl diphosphate + diphosphate. It carries out the reaction isopentenyl diphosphate + (2E)-geranyl diphosphate = (2E,6E)-farnesyl diphosphate + diphosphate. It functions in the pathway isoprenoid biosynthesis; farnesyl diphosphate biosynthesis; farnesyl diphosphate from geranyl diphosphate and isopentenyl diphosphate: step 1/1. Its pathway is isoprenoid biosynthesis; geranyl diphosphate biosynthesis; geranyl diphosphate from dimethylallyl diphosphate and isopentenyl diphosphate: step 1/1. Stimulated by methyl jasmonate (MeJA). In terms of biological role, catalyzes the sequential condensation of isopentenyl pyrophosphate with the allylic pyrophosphates, dimethylallyl pyrophosphate, and then with the resultant geranylpyrophosphate to the ultimate product farnesyl pyrophosphate. Component of the triterpene saponins (e.g. ginsenosides or panaxosides) and phytosterols biosynthetic pathways. Promotes the accumulation of ginsenosides. The protein is Farnesyl pyrophosphate synthase of Panax ginseng (Korean ginseng).